The primary structure comprises 545 residues: Tetrahydrocannabinolic acid synthase (545 aa).

Positions 1–28 (MNCSAFSFWFVCKIIFFFLSFHIQISIA) are cleaved as a signal peptide. Cys37 and Cys99 are oxidised to a cystine. N-linked (GlcNAc...) asparagine glycans are attached at residues Asn65 and Asn89. The 175-residue stretch at 77–251 (TTPKPLVIVT…AAWKIKLVAV (175 aa)) folds into the FAD-binding PCMH-type domain. FAD is bound by residues 109 to 115 (TRSGGHD) and Ser120. A cross-link (6-(S-cysteinyl)-8alpha-(pros-histidyl)-FAD (His-Cys)) is located at residues 114–176 (HDAEGMSYIS…ENLSFPGGYC (63 aa)). Asn168 carries an N-linked (GlcNAc...) asparagine glycan. Residues Cys176, 180-184 (GVGGH), Tyr190, Glu236, and Ile241 contribute to the FAD site. Cannabigerolate is bound at residue His292. 3 N-linked (GlcNAc...) asparagine glycosylation sites follow: Asn297, Asn305, and Asn329. Cannabigerolate contacts are provided by Tyr417 and Glu442. Asn467 carries an N-linked (GlcNAc...) asparagine glycan. 481-483 (YLN) serves as a coordination point for FAD. Residue Tyr484 is the Proton acceptor of the active site. An N-linked (GlcNAc...) asparagine glycan is attached at Asn499.

Belongs to the oxygen-dependent FAD-linked oxidoreductase family. In terms of assembly, monomer. The cofactor is FAD. Glycosylated when produced in a heterologous system. The deglycosylated THCA synthase has more catalytic activity than the glycosylated form. In terms of processing, the FAD cofactor is bound via a bicovalent 6-S-cysteinyl, 8alpha-N1-histidyl FAD linkage. Expressed in the secretory cells of glandular trichomes.

Its subcellular location is the secreted. The protein resides in the extracellular space. It is found in the apoplast. The catalysed reaction is cannabigerolate + O2 = Delta(9)-tetrahydrocannabinolate + H2O2. It participates in secondary metabolite biosynthesis; terpenoid biosynthesis. With respect to regulation, inhibited by Hg(2+). Its function is as follows. Oxidoreductase involved in the biosynthesis of cannabinoids-related terpenophenolic natural products, which have pharmacological activity. Catalyzes the oxidative cyclization of the monoterpene moiety in cannabigerolic acid (CBGA), producing delta(9)-tetrahydrocannabinolate (THCA), the major cannabioid in drug-type Cannabis plants. Can also use cannabinerolic acid as substrate, but not cannabigerol or cannabinerol. The chain is Tetrahydrocannabinolic acid synthase from Cannabis sativa (Hemp).